Here is a 734-residue protein sequence, read N- to C-terminus: Photosystem I P700 chlorophyll a apoprotein A2 (734 aa).

A run of 8 helical transmembrane segments spans residues 46 to 69 (IFAS…FHVA), 135 to 158 (LYTG…LHLQ), 175 to 199 (LNHH…HVAI), 273 to 291 (IAHH…GHMY), 330 to 353 (IHFQ…QHMY), 369 to 395 (AALY…IFFI), 417 to 439 (AIIS…LYVH), and 517 to 535 (FLVH…LILV). 2 residues coordinate [4Fe-4S] cluster: Cys-559 and Cys-568. A run of 2 helical transmembrane segments spans residues 575–596 (AFYL…YWHW) and 643–665 (LSVW…MFLI). Chlorophyll a is bound by residues His-654, Met-662, and Tyr-670. Trp-671 is a phylloquinone binding site. Residues 707-727 (LVGLAHFSVGYIFTYAAFLIA) traverse the membrane as a helical segment.

Belongs to the PsaA/PsaB family. As to quaternary structure, the PsaA/B heterodimer binds the P700 chlorophyll special pair and subsequent electron acceptors. PSI consists of a core antenna complex that captures photons, and an electron transfer chain that converts photonic excitation into a charge separation. The eukaryotic PSI reaction center is composed of at least 11 subunits. P700 is a chlorophyll a/chlorophyll a' dimer, A0 is one or more chlorophyll a, A1 is one or both phylloquinones and FX is a shared 4Fe-4S iron-sulfur center. serves as cofactor.

It localises to the plastid. Its subcellular location is the chloroplast thylakoid membrane. The catalysed reaction is reduced [plastocyanin] + hnu + oxidized [2Fe-2S]-[ferredoxin] = oxidized [plastocyanin] + reduced [2Fe-2S]-[ferredoxin]. Functionally, psaA and PsaB bind P700, the primary electron donor of photosystem I (PSI), as well as the electron acceptors A0, A1 and FX. PSI is a plastocyanin-ferredoxin oxidoreductase, converting photonic excitation into a charge separation, which transfers an electron from the donor P700 chlorophyll pair to the spectroscopically characterized acceptors A0, A1, FX, FA and FB in turn. Oxidized P700 is reduced on the lumenal side of the thylakoid membrane by plastocyanin. This chain is Photosystem I P700 chlorophyll a apoprotein A2, found in Aethionema grandiflorum (Persian stone-cress).